We begin with the raw amino-acid sequence, 322 residues long: Cell division control protein 10 (322 aa).

An N-acetylmethionine modification is found at methionine 1. One can recognise a Septin-type G domain in the interval 29–302; sequence KGFQFNIMVV…EGFRARQLIA (274 aa). The interval 39–46 is G1 motif; sequence GQSGLGKS. GTP is bound by residues 39–46, threonine 74, glycine 100, and 180–188; these read GQSGLGKS and KSDTLTLDE. The tract at residues 97 to 100 is G3 motif; it reads DTPG. Residues 179 to 182 form a G4 motif region; it reads GKSD. Residue threonine 216 is modified to Phosphothreonine. GTP is bound by residues glycine 236 and arginine 251.

Belongs to the TRAFAC class TrmE-Era-EngA-EngB-Septin-like GTPase superfamily. Septin GTPase family. In terms of assembly, component of the septin complex which consists of CDC3, CDC10, CDC11, CDC12 and probably SHS1 and rearranges to a cortical collar of highly ordered filaments at the mother-bud-neck. A complex formed by CDC3, CDC10, CDC11 and CDC12 is capable of forming long filaments in vitro and the components seem to be present in a 2:2:2:2 arrangement in vivo. The filaments are proposed to be formed by the end-to-end polymerization of CDC3-CDC12-CDC11 complexes with CDC10 serving as a bridge to bundle the polymers into paired filaments. Component of the GIN4 complex composed of at least BNI5, CDC3, CDC10, CDC11, CDC12, GIN4, NAP1 and SHS1. Self-associates. Interacts with SYP1.

The protein localises to the membrane. The protein resides in the bud neck. Septins are GTPases involved in cytokinesis that assemble early in the cell cycle as a patch at the incipient bud site and form a ring approximate 15 minutes before bud emergence, which transforms into an hour-glass shaped collar of cortical filaments that spans both sides of the mother-bud neck. This collar persists until just before cytokinesis, when it splits into two rings that occupy opposite sides of the neck. The septins at the bud neck serve as a structural scaffold that recruits different components involved in diverse processes at specific stages during the cell cycle. Many proteins bind asymmetrically to the septin collar. The septin assembly is regulated by protein kinases GIN4 and/or CLA4. May act by recruiting MYO1 and HOF1, a protein involved in septation, to the site of cleavage. Septins are also involved in cell morphogenesis, bud site selection, chitin deposition, cell cycle regulation, cell compartmentalization and spore wall formation. The protein is Cell division control protein 10 (CDC10) of Saccharomyces cerevisiae (strain ATCC 204508 / S288c) (Baker's yeast).